A 368-amino-acid chain; its full sequence is 4-hydroxy-3-methylbut-2-en-1-yl diphosphate synthase (flavodoxin) (368 aa).

4 residues coordinate [4Fe-4S] cluster: Cys268, Cys271, Cys303, and Glu310.

The protein belongs to the IspG family. It depends on [4Fe-4S] cluster as a cofactor.

It catalyses the reaction (2E)-4-hydroxy-3-methylbut-2-enyl diphosphate + oxidized [flavodoxin] + H2O + 2 H(+) = 2-C-methyl-D-erythritol 2,4-cyclic diphosphate + reduced [flavodoxin]. The protein operates within isoprenoid biosynthesis; isopentenyl diphosphate biosynthesis via DXP pathway; isopentenyl diphosphate from 1-deoxy-D-xylulose 5-phosphate: step 5/6. Functionally, converts 2C-methyl-D-erythritol 2,4-cyclodiphosphate (ME-2,4cPP) into 1-hydroxy-2-methyl-2-(E)-butenyl 4-diphosphate. The polypeptide is 4-hydroxy-3-methylbut-2-en-1-yl diphosphate synthase (flavodoxin) (Listeria monocytogenes serovar 1/2a (strain ATCC BAA-679 / EGD-e)).